The sequence spans 647 residues: Acetyl-coenzyme A synthetase (647 aa).

Residues 190–193, T308, and N332 each bind CoA; that span reads RGGR. ATP is bound by residues 384–386, 408–413, D497, and R512; these read GEP and DTWWQT. A CoA-binding site is contributed by S520. R523 is an ATP binding site. Positions 534, 536, and 539 each coordinate Mg(2+). R581 is a binding site for CoA. An N6-acetyllysine modification is found at K606.

This sequence belongs to the ATP-dependent AMP-binding enzyme family. Mg(2+) is required as a cofactor. Acetylated. Deacetylation by the SIR2-homolog deacetylase activates the enzyme.

The catalysed reaction is acetate + ATP + CoA = acetyl-CoA + AMP + diphosphate. In terms of biological role, catalyzes the conversion of acetate into acetyl-CoA (AcCoA), an essential intermediate at the junction of anabolic and catabolic pathways. AcsA undergoes a two-step reaction. In the first half reaction, AcsA combines acetate with ATP to form acetyl-adenylate (AcAMP) intermediate. In the second half reaction, it can then transfer the acetyl group from AcAMP to the sulfhydryl group of CoA, forming the product AcCoA. This is Acetyl-coenzyme A synthetase from Parvibaculum lavamentivorans (strain DS-1 / DSM 13023 / NCIMB 13966).